Reading from the N-terminus, the 404-residue chain is MKKLLKSVLAFAVLGSASSLHALPVGNPAEPSLMIDGILWEGFGGDPCDPCTTWCDAISLRLGYYGDFVFDRVLKTDVNKQFEMGPVPTTTDTDAAADITTSTPRENPAYGKHMQDAEMFTNAAYMALNIWDRFDVFCTLGATSGYLKGNSASFNLVGLFGDGVANAANAIATVAADSLPNVSLSQAVVELYTDTAFAWSVGARAALWECGCATLGASFQYAQSKPKVEELNVLCNAAQFTINKPKGYVGKEFPLALTAGTDSATDTKDASIDYHEWQASLALSYRLNMFTPYIGVKWSRASFDADTIRIAQPKLAEAILDVTTWNPTIAGAGTIADGTGAAATANGLADTLQIVSLQLNKMKSRKSCGLAIGTTIVDADKYAVTVETRLIDERAAHVNAQFRF.

The first 22 residues, 1-22, serve as a signal peptide directing secretion; sequence MKKLLKSVLAFAVLGSASSLHA. Residues 85–110 form a disordered region; it reads GPVPTTTDTDAAADITTSTPRENPAY. Residues 89–103 show a composition bias toward low complexity; the sequence is TTTDTDAAADITTST.

The protein belongs to the chlamydial porin (CP) (TC 1.B.2) family. Part of a disulfide cross-linked outer membrane complex (COMC) composed of the major outer membrane porin (MOMP), the small cysteine-rich protein (OmcA) and the large cysteine-rich periplasmic protein (OmcB).

Its subcellular location is the cell outer membrane. In elementary bodies (EBs, the infectious stage, which is able to survive outside the host cell) provides the structural integrity of the outer envelope through disulfide cross-links with the small cysteine-rich protein and the large cysteine-rich periplasmic protein. It has been described in publications as the Sarkosyl-insoluble COMC (Chlamydia outer membrane complex), and serves as the functional equivalent of peptidoglycan. Functionally, permits diffusion of specific solutes through the outer membrane. The chain is Major outer membrane porin (ompA) from Chlamydia muridarum.